Consider the following 534-residue polypeptide: MSNKFTMESPKHLVDDVLFISPTNDGSEEKPTEVTFQEDEGHDASLHNRSHDKKSELATEREIMATTTDDDGIPSPSHPMEKRVLRKMDIYLIPLMGMLYFLSNLDKSNIGNAEVAGLSKDIHLVGTQYNTCVTVFFATYVLFDPIGTNLLKIMGPPLMMSICLTCFGAISLGTAWVKNYAQLIVVRLLLGAFEGMIYPAINMYLSVCYRREQYALRFAFVFSAACLSSSFGGLIAYGCSKISGSLKDWQYIYIVEGCISLGFVPFYAFGLSKNLEDSWFFNKEEKEYISERYKTMNTFDPDEKFEWFQVWQAVKDVKTWASAVALFGIDLTTFGLTVFLPIIITSMGFTNVRAQLMTVPIYFLTAIVFFICAVWSDRIKLRSPFILGACLTTSIGIAIVLGSQVHGVRYFGVYILCMGIYVNAACNCLWLSGNTGNYFKRATALGINLFFGSGSGLVSGQIFVAKDKPRYIKGLSISLAFQVFSIFMTVVQIFLYKRENDKKKAIIDRCNELGEPIPYDERLSDKNPEFKYMY.

Residues 1-130 (MSNKFTMESP…DIHLVGTQYN (130 aa)) are Extracellular-facing. The segment at 21 to 56 (SPTNDGSEEKPTEVTFQEDEGHDASLHNRSHDKKSE) is disordered. Residue serine 27 is modified to Phosphoserine. A helical membrane pass occupies residues 131 to 151 (TCVTVFFATYVLFDPIGTNLL). Residue lysine 152 is a topological domain, cytoplasmic. A helical membrane pass occupies residues 153–173 (IMGPPLMMSICLTCFGAISLG). Topologically, residues 174 to 187 (TAWVKNYAQLIVVR) are extracellular. Residues 188 to 208 (LLLGAFEGMIYPAINMYLSVC) traverse the membrane as a helical segment. Residues 209 to 217 (YRREQYALR) lie on the Cytoplasmic side of the membrane. Residues 218–238 (FAFVFSAACLSSSFGGLIAYG) traverse the membrane as a helical segment. The Extracellular segment spans residues 239 to 250 (CSKISGSLKDWQ). Residues 251–271 (YIYIVEGCISLGFVPFYAFGL) form a helical membrane-spanning segment. Topologically, residues 272-323 (SKNLEDSWFFNKEEKEYISERYKTMNTFDPDEKFEWFQVWQAVKDVKTWASA) are cytoplasmic. Residue lysine 283 forms a Glycyl lysine isopeptide (Lys-Gly) (interchain with G-Cter in ubiquitin) linkage. Residues 324 to 344 (VALFGIDLTTFGLTVFLPIII) traverse the membrane as a helical segment. Residues 345–355 (TSMGFTNVRAQ) lie on the Extracellular side of the membrane. Residues 356–376 (LMTVPIYFLTAIVFFICAVWS) form a helical membrane-spanning segment. At 377-384 (DRIKLRSP) the chain is on the cytoplasmic side. Residues 385-405 (FILGACLTTSIGIAIVLGSQV) traverse the membrane as a helical segment. At 406–410 (HGVRY) the chain is on the extracellular side. Residues 411-431 (FGVYILCMGIYVNAACNCLWL) traverse the membrane as a helical segment. Over 432–444 (SGNTGNYFKRATA) the chain is Cytoplasmic. The chain crosses the membrane as a helical span at residues 445 to 465 (LGINLFFGSGSGLVSGQIFVA). Over 466–474 (KDKPRYIKG) the chain is Extracellular. A helical membrane pass occupies residues 475-495 (LSISLAFQVFSIFMTVVQIFL). The Cytoplasmic portion of the chain corresponds to 496 to 534 (YKRENDKKKAIIDRCNELGEPIPYDERLSDKNPEFKYMY).

This sequence belongs to the major facilitator superfamily. Allantoate permease family.

The protein resides in the membrane. Involved in the uptake of nicotinic acid. The protein is High-affinity nicotinic acid transporter (TNA1) of Saccharomyces cerevisiae (strain ATCC 204508 / S288c) (Baker's yeast).